The chain runs to 362 residues: Chorismate synthase (362 aa).

Arginine 47 contributes to the NADP(+) binding site. FMN is bound by residues 124–126 (RSS), glycine 286, 301–305 (KPTAT), and arginine 327.

The protein belongs to the chorismate synthase family. Homotetramer. It depends on FMNH2 as a cofactor.

The enzyme catalyses 5-O-(1-carboxyvinyl)-3-phosphoshikimate = chorismate + phosphate. Its pathway is metabolic intermediate biosynthesis; chorismate biosynthesis; chorismate from D-erythrose 4-phosphate and phosphoenolpyruvate: step 7/7. Functionally, catalyzes the anti-1,4-elimination of the C-3 phosphate and the C-6 proR hydrogen from 5-enolpyruvylshikimate-3-phosphate (EPSP) to yield chorismate, which is the branch point compound that serves as the starting substrate for the three terminal pathways of aromatic amino acid biosynthesis. This reaction introduces a second double bond into the aromatic ring system. The protein is Chorismate synthase of Synechococcus elongatus (strain ATCC 33912 / PCC 7942 / FACHB-805) (Anacystis nidulans R2).